Reading from the N-terminus, the 229-residue chain is Movement and silencing protein TGBp1 (229 aa).

The (+)RNA virus helicase ATP-binding domain maps to 1–114 (MVEFTKRLLL…PAAQVPHFVK (114 aa)). One can recognise a (+)RNA virus helicase C-terminal domain in the interval 115 to 229 (LFSHRCGLNS…MSFDAADTSA (115 aa)).

This sequence belongs to the Tymovirales TGBp1 protein family. As to quaternary structure, homodimer and homooligomer. Interacts with capsid protein. Interacts with host AGO1; this interaction targets the host protein for degradation, thereby suppressing the antiviral RNA silencing.

It is found in the host cytoplasm. Functionally, transports viral genome to neighboring plant cells directly through plasmosdesmata, without any budding. The movement protein allows efficient cell to cell propagation, by bypassing the host cell wall barrier. Increases plasmodesma size exclusion limit. Acts as a suppressor of RNA-mediated gene silencing, also known as post-transcriptional gene silencing (PTGS), a mechanism of plant viral defense that limits the accumulation of viral RNAs. This Strawberry mild yellow edge-associated virus (SMYEaV) protein is Movement and silencing protein TGBp1.